The sequence spans 117 residues: Large ribosomal subunit protein uL22 (117 aa).

It belongs to the universal ribosomal protein uL22 family. Part of the 50S ribosomal subunit.

Functionally, this protein binds specifically to 23S rRNA; its binding is stimulated by other ribosomal proteins, e.g. L4, L17, and L20. It is important during the early stages of 50S assembly. It makes multiple contacts with different domains of the 23S rRNA in the assembled 50S subunit and ribosome. The globular domain of the protein is located near the polypeptide exit tunnel on the outside of the subunit, while an extended beta-hairpin is found that lines the wall of the exit tunnel in the center of the 70S ribosome. The chain is Large ribosomal subunit protein uL22 from Latilactobacillus sakei subsp. sakei (strain 23K) (Lactobacillus sakei subsp. sakei).